Consider the following 573-residue polypeptide: Urease subunit alpha (573 aa).

Ni(2+) is bound by residues histidine 139, histidine 141, and lysine 222. Position 222 is an N6-carboxylysine (lysine 222). A substrate-binding site is contributed by histidine 224. The Ni(2+) site is built by histidine 251 and histidine 277. The active-site Proton donor is the histidine 325. Aspartate 365 lines the Ni(2+) pocket.

It belongs to the metallo-dependent hydrolases superfamily. Urease alpha subunit family. Heterotrimer of UreA (gamma), UreB (beta) and UreC (alpha) subunits. Three heterotrimers associate to form the active enzyme. The cofactor is Ni cation. Carboxylation allows a single lysine to coordinate two nickel ions.

The protein resides in the cytoplasm. The enzyme catalyses urea + 2 H2O + H(+) = hydrogencarbonate + 2 NH4(+). The protein operates within nitrogen metabolism; urea degradation; CO(2) and NH(3) from urea (urease route): step 1/1. The protein is Urease subunit alpha of Flavobacterium johnsoniae (strain ATCC 17061 / DSM 2064 / JCM 8514 / BCRC 14874 / CCUG 350202 / NBRC 14942 / NCIMB 11054 / UW101) (Cytophaga johnsonae).